The chain runs to 269 residues: Regulatory protein RecX (269 aa).

It belongs to the RecX family.

The protein resides in the cytoplasm. Functionally, modulates RecA activity. The sequence is that of Regulatory protein RecX from Listeria monocytogenes serotype 4a (strain HCC23).